Consider the following 1002-residue polypeptide: E3 ubiquitin-protein ligase BRE1B (1002 aa).

The interval Met-1–Leu-32 is disordered. A compositionally biased stretch (basic and acidic residues) spans Pro-18 to Thr-28. Lys-20 is modified (N6-acetyllysine). Ser-42 is subject to Phosphoserine. A coiled-coil region spans residues Lys-55–Leu-91. The segment at Ser-120–Arg-148 is disordered. Coiled coils occupy residues Lys-190–Leu-378 and Leu-438–Ser-526. N6-acetyllysine occurs at positions 356 and 518. 2 disordered regions span residues Arg-520–Lys-562 and Lys-579–Leu-652. Residues Lys-579 and Lys-580 each participate in a glycyl lysine isopeptide (Lys-Gly) (interchain with G-Cter in SUMO2) cross-link. Phosphoserine occurs at positions 585 and 586. Basic and acidic residues-rich tracts occupy residues Arg-603–Gly-620 and Arg-634–Leu-652. A coiled-coil region spans residues Ala-628–Leu-947. The segment at Cys-949–Asn-988 adopts an RING-type zinc-finger fold.

The protein belongs to the BRE1 family. As to quaternary structure, component of the RNF20/40 complex (also known as BRE1 complex) probably composed of 2 copies of RNF20/BRE1A and 2 copies of RNF40/BRE1B. Interacts with UBE2E1/UBCH6. Interacts with RB1 and WAC. May interact with STX1A. As to expression, ubiquitously expressed. Expressed in brain, testis, heart, liver and kidney. Weakly expressed in lung, spleen and skeletal muscle (at protein level).

The protein localises to the nucleus. It carries out the reaction S-ubiquitinyl-[E2 ubiquitin-conjugating enzyme]-L-cysteine + [acceptor protein]-L-lysine = [E2 ubiquitin-conjugating enzyme]-L-cysteine + N(6)-ubiquitinyl-[acceptor protein]-L-lysine.. The protein operates within protein modification; protein ubiquitination. Component of the RNF20/40 E3 ubiquitin-protein ligase complex that mediates monoubiquitination of 'Lys-120' of histone H2B (H2BK120ub1). H2BK120ub1 gives a specific tag for epigenetic transcriptional activation and is also prerequisite for histone H3 'Lys-4' and 'Lys-79' methylation (H3K4me and H3K79me, respectively). It thereby plays a central role in histone code and gene regulation. The RNF20/40 complex forms a H2B ubiquitin ligase complex in cooperation with the E2 enzyme UBE2A or UBE2B; reports about the cooperation with UBE2E1/UBCH are contradictory. Required for transcriptional activation of Hox genes. The sequence is that of E3 ubiquitin-protein ligase BRE1B (Rnf40) from Rattus norvegicus (Rat).